Reading from the N-terminus, the 606-residue chain is NADH-ubiquinone oxidoreductase chain 5 (606 aa).

The next 15 helical transmembrane spans lie at 3–23, 38–58, 87–107, 124–144, 180–200, 216–236, 244–264, 276–296, 304–323, 328–350, 369–389, 404–424, 460–480, 483–503, and 586–606; these read VINL…LPII, ITKT…LLFI, FFSL…MEFS, LLLF…LQLF, IGDM…NSWE, LLGL…HPWL, TPVS…FTLI, IQTS…ICAL, IIAL…IGIN, AFIH…GSII, MPIT…MPFL, MSYI…MTAS, LILG…PHTT, MTMP…GFTV, and LMKL…LIAL.

This sequence belongs to the complex I subunit 5 family. Core subunit of respiratory chain NADH dehydrogenase (Complex I) which is composed of 45 different subunits.

The protein localises to the mitochondrion inner membrane. It carries out the reaction a ubiquinone + NADH + 5 H(+)(in) = a ubiquinol + NAD(+) + 4 H(+)(out). Its function is as follows. Core subunit of the mitochondrial membrane respiratory chain NADH dehydrogenase (Complex I) which catalyzes electron transfer from NADH through the respiratory chain, using ubiquinone as an electron acceptor. Essential for the catalytic activity and assembly of complex I. The polypeptide is NADH-ubiquinone oxidoreductase chain 5 (MT-ND5) (Loxodonta africana (African elephant)).